The sequence spans 84 residues: UPF0457 protein BCE33L2961 (84 aa).

This sequence belongs to the UPF0457 family.

In Bacillus cereus (strain ZK / E33L), this protein is UPF0457 protein BCE33L2961.